We begin with the raw amino-acid sequence, 202 residues long: Transmembrane 4 L6 family member 4 (202 aa).

The Cytoplasmic portion of the chain corresponds to 1-9 (MCTGGCARC). Residues 10–30 (LGGTLIPLAFFGFLANILLFF) traverse the membrane as a helical segment. At 31–45 (PGGKVIDDNDHLSQE) the chain is on the extracellular side. Residues 46-66 (IWFFGGILGSGVLMIFPALVF) traverse the membrane as a helical segment. At 67-93 (LGLKNNDCCGCCGNEGCGKRFAMFTST) the chain is on the cytoplasmic side. The helical transmembrane segment at 94 to 114 (IFAVVGFLGAGYSFIISAISI) threads the bilayer. Residues 115-158 (NKGPKCLMANSTWGYPFHDGDYLNDEALWNKCREPLNVVPWNLT) are Extracellular-facing. N-linked (GlcNAc...) asparagine glycosylation is found at asparagine 124 and asparagine 156. The chain crosses the membrane as a helical span at residues 159–179 (LFSILLVVGGIQMVLCAIQVV). Topologically, residues 180–202 (NGLLGTLCGDCQCCGCCGGDGPV) are cytoplasmic.

It belongs to the L6 tetraspanin family. N-glycosylated. Glycosylation is required for the growth inhibitory effect. As to expression, jejunum and liver.

It localises to the membrane. Regulates the adhesive and proliferative status of intestinal epithelial cells. Can mediate density-dependent cell proliferation. This chain is Transmembrane 4 L6 family member 4 (TM4SF4), found in Homo sapiens (Human).